Reading from the N-terminus, the 72-residue chain is 3-deoxy-manno-octulosonate cytidylyltransferase (72 aa).

This sequence belongs to the KdsB family. As to quaternary structure, homodimer.

The protein localises to the cytoplasm. It carries out the reaction 3-deoxy-alpha-D-manno-oct-2-ulosonate + CTP = CMP-3-deoxy-beta-D-manno-octulosonate + diphosphate. Its pathway is nucleotide-sugar biosynthesis; CMP-3-deoxy-D-manno-octulosonate biosynthesis; CMP-3-deoxy-D-manno-octulosonate from 3-deoxy-D-manno-octulosonate and CTP: step 1/1. It functions in the pathway bacterial outer membrane biogenesis; lipopolysaccharide biosynthesis. Functionally, activates KDO (a required 8-carbon sugar) for incorporation into bacterial lipopolysaccharide in Gram-negative bacteria. The polypeptide is 3-deoxy-manno-octulosonate cytidylyltransferase (kpsU) (Escherichia coli).